A 273-amino-acid chain; its full sequence is Large ribosomal subunit protein uL2 (273 aa).

The tract at residues 221–263 (RGTAMNPVDHPHGGGEGRNFGKHPVSPWGLKTKGKKTRRNKRT) is disordered. The span at 252 to 263 (TKGKKTRRNKRT) shows a compositional bias: basic residues.

It belongs to the universal ribosomal protein uL2 family. As to quaternary structure, part of the 50S ribosomal subunit. Forms a bridge to the 30S subunit in the 70S ribosome.

Functionally, one of the primary rRNA binding proteins. Required for association of the 30S and 50S subunits to form the 70S ribosome, for tRNA binding and peptide bond formation. It has been suggested to have peptidyltransferase activity; this is somewhat controversial. Makes several contacts with the 16S rRNA in the 70S ribosome. This is Large ribosomal subunit protein uL2 from Buchnera aphidicola subsp. Cinara cedri (strain Cc).